The primary structure comprises 294 residues: 4-hydroxy-tetrahydrodipicolinate synthase (294 aa).

T45 contributes to the pyruvate binding site. Y133 (proton donor/acceptor) is an active-site residue. The active-site Schiff-base intermediate with substrate is K161. A pyruvate-binding site is contributed by I203.

The protein belongs to the DapA family. Homotetramer; dimer of dimers.

The protein resides in the cytoplasm. The catalysed reaction is L-aspartate 4-semialdehyde + pyruvate = (2S,4S)-4-hydroxy-2,3,4,5-tetrahydrodipicolinate + H2O + H(+). The protein operates within amino-acid biosynthesis; L-lysine biosynthesis via DAP pathway; (S)-tetrahydrodipicolinate from L-aspartate: step 3/4. Catalyzes the condensation of (S)-aspartate-beta-semialdehyde [(S)-ASA] and pyruvate to 4-hydroxy-tetrahydrodipicolinate (HTPA). This is 4-hydroxy-tetrahydrodipicolinate synthase from Shewanella baltica (strain OS223).